The following is a 418-amino-acid chain: Glucose-1-phosphate adenylyltransferase (418 aa).

Alpha-D-glucose 1-phosphate-binding positions include tyrosine 104, glycine 169, 184–185 (EK), and serine 202.

Belongs to the bacterial/plant glucose-1-phosphate adenylyltransferase family. Homotetramer.

It catalyses the reaction alpha-D-glucose 1-phosphate + ATP + H(+) = ADP-alpha-D-glucose + diphosphate. It participates in glycan biosynthesis; glycogen biosynthesis. In terms of biological role, involved in the biosynthesis of ADP-glucose, a building block required for the elongation reactions to produce glycogen. Catalyzes the reaction between ATP and alpha-D-glucose 1-phosphate (G1P) to produce pyrophosphate and ADP-Glc. This is Glucose-1-phosphate adenylyltransferase from Jannaschia sp. (strain CCS1).